Reading from the N-terminus, the 313-residue chain is Porphobilinogen deaminase (313 aa).

The residue at position 242 (cysteine 242) is an S-(dipyrrolylmethanemethyl)cysteine.

Belongs to the HMBS family. In terms of assembly, monomer. It depends on dipyrromethane as a cofactor.

The enzyme catalyses 4 porphobilinogen + H2O = hydroxymethylbilane + 4 NH4(+). It functions in the pathway porphyrin-containing compound metabolism; protoporphyrin-IX biosynthesis; coproporphyrinogen-III from 5-aminolevulinate: step 2/4. In terms of biological role, tetrapolymerization of the monopyrrole PBG into the hydroxymethylbilane pre-uroporphyrinogen in several discrete steps. The protein is Porphobilinogen deaminase of Pectobacterium atrosepticum (strain SCRI 1043 / ATCC BAA-672) (Erwinia carotovora subsp. atroseptica).